The chain runs to 351 residues: Ribosomal RNA small subunit methyltransferase H (351 aa).

Residues 48–50, Asp67, Phe94, Asp115, and Gln122 contribute to the S-adenosyl-L-methionine site; that span reads GGY. The segment at 274-351 is disordered; it reads AAQASRHVPG…PAPQGRGPRR (78 aa).

The protein belongs to the methyltransferase superfamily. RsmH family.

It is found in the cytoplasm. It catalyses the reaction cytidine(1402) in 16S rRNA + S-adenosyl-L-methionine = N(4)-methylcytidine(1402) in 16S rRNA + S-adenosyl-L-homocysteine + H(+). Functionally, specifically methylates the N4 position of cytidine in position 1402 (C1402) of 16S rRNA. This Methylorubrum extorquens (strain PA1) (Methylobacterium extorquens) protein is Ribosomal RNA small subunit methyltransferase H.